The chain runs to 550 residues: Transcription factor 7-like 1-C (550 aa).

Positions 1 to 11 are enriched in gly residues; the sequence is MPQLNSGGGDE. The interaction with CTNNB1-A stretch occupies residues 1 to 60; sequence MPQLNSGGGDELGANDELIRFKDEGEQEEKSPGEGSAEDLADVKSSLVNESENHSSDSDS. Disordered stretches follow at residues 1 to 76, 182 to 206, and 390 to 473; these read MPQL…EKPR, GTPP…HPSE, and WSAR…SLTT. 2 stretches are compositionally biased toward basic and acidic residues: residues 17-32 and 51-76; these read ELIR…EKSP and SENH…EKPR. Positions 108-311 are interaction with AES and TLE4-A; the sequence is LGGITCPMVP…SPNLSRKSNV (204 aa). The segment at residues 323–391 is a DNA-binding region (HMG box); it reads IKKPLNAFML…LHSQLYPSWS (69 aa). Positions 406-415 are enriched in basic and acidic residues; it reads KQSPEMENYT. Residues 407 to 550 form an interaction with CTBP-B region; that stretch reads QSPEMENYTK…PLSLVTRSSD (144 aa). Positions 444–463 are enriched in low complexity; sequence SPATPSAALASPAAPAATHS. Residues 464–473 are compositionally biased toward polar residues; sequence EQAQPLSLTT.

Belongs to the TCF/LEF family. As to quaternary structure, interacts with csnk1e, ctnnb1-A, ctbp-B, dact1-A and gsk3b. May interact with ase and tle4-A. In terms of processing, phosphorylated. Phosphorylation by csnk1e promotes binding to ctnnb1-A while phosphorylation by gsk3b may reverse this effect.

The protein localises to the nucleus. Participates in the Wnt signaling pathway. Binds to DNA and acts as a repressor in the absence of ctnnb1-A and possibly ctnnb1-B, and as an activator in the presence of these proteins. Required early in development for the establishment of the dorsal body axis in response to maternal Wnt signaling. In Xenopus laevis (African clawed frog), this protein is Transcription factor 7-like 1-C (tcf7l1-c).